We begin with the raw amino-acid sequence, 883 residues long: MEQDKENKQSLPSKYNPKEVEEGRYQFWLDGKFFEATGDPDKEPYSIVIPPPNVTGRLHLGHAWDTSMQDTITRMKRMQGYDVLWLPGMDHAGIATQAKVEARLKESGTNRYELGREKFLEKAWEWKEEYAAFIRSQWEKLGLGLDYSRERFTLDEGLSDAVREVFVKLYEKGLIYRGEYIINWDPSTKTALSDIEVIYEEIQGKFYHMRYPIKGSDETIEIATTRPETMLGDTAVAVHPKDERYQHLIGKTVILPIVGREIEIVADDYVDMELGSGAVKITPAHDPNDFEIGNRHQLERILVMNEDGSMNENAGKYQGLDRFECRKQIVKDLKEQGVMFNIEERTHQVGHSERSGAVVEPYLSTQWFVKMDPLAKSALDMQADADEKVNFVPDRFERTYFNWMDNIRDWCISRQLWWGHRIPAWYHKETKEIYVGKEAPADIENWEQDEDVLDTWFSSALWPFSTMGWPNEDSADLKRYFPTNVLVTGYDIIFFWVSRMIFQSKEFMNEKPFEDTLLHGLIRDADGRKMSKSLGNGVDPMDVIEKYGADSLRYFLMTGSTPGQDLRFHWEKVESTWNFANKVWNASRFSIMNMEGFTYEDIDLTGELSLPDRWILARLNETIEQVTRNSNKYEFGEAGRHLYNFIWDEFCDWYIEMAKLSLYGEDENKKKTTRSVLAHVLDQTMRMLHPFMPFITEEIWQQLPHEGPSITVSKWPEVNSEFDNPQAVQEMQRLVSIIRSVRNSRAEVDTPMSKQIKMLIKTENEQLTAELEKNRDYLERFCNPSELSISTVIEAPDKAMTSVVTGAEIFLPLEGLIDFDKEIKRLENELAKWTKEVERVQKKLSNQGFVSKAPESVVEEEKRKEKDYLDKQAKVKTRLSELK.

A 'HIGH' region motif is present at residues 52–62 (PNVTGRLHLGH). Positions 529-533 (KMSKS) match the 'KMSKS' region motif. ATP is bound at residue K532. Residues 813–848 (LEGLIDFDKEIKRLENELAKWTKEVERVQKKLSNQG) are a coiled coil.

It belongs to the class-I aminoacyl-tRNA synthetase family. ValS type 1 subfamily. In terms of assembly, monomer.

The protein localises to the cytoplasm. It carries out the reaction tRNA(Val) + L-valine + ATP = L-valyl-tRNA(Val) + AMP + diphosphate. Functionally, catalyzes the attachment of valine to tRNA(Val). As ValRS can inadvertently accommodate and process structurally similar amino acids such as threonine, to avoid such errors, it has a 'posttransfer' editing activity that hydrolyzes mischarged Thr-tRNA(Val) in a tRNA-dependent manner. In Oceanobacillus iheyensis (strain DSM 14371 / CIP 107618 / JCM 11309 / KCTC 3954 / HTE831), this protein is Valine--tRNA ligase.